A 436-amino-acid chain; its full sequence is Protein VHS2 (436 aa).

The tract at residues methionine 1–serine 34 is disordered. Positions asparagine 7–aspartate 21 are enriched in basic and acidic residues. A phosphoserine mark is found at serine 53, serine 61, serine 102, and serine 172. Disordered stretches follow at residues arginine 165–serine 195, asparagine 211–phenylalanine 266, asparagine 282–asparagine 360, and asparagine 389–lysine 436. Residues arginine 171 to serine 183 show a composition bias toward polar residues. 3 stretches are compositionally biased toward low complexity: residues asparagine 211–asparagine 226, serine 238–proline 261, and asparagine 282–serine 299. Phosphoserine occurs at positions 299, 301, 303, and 325. A compositionally biased stretch (polar residues) spans arginine 300–glutamine 312. Residues threonine 401–lysine 436 show a composition bias toward low complexity.

To yeast MFL3.

The protein resides in the cytoplasm. In terms of biological role, can suppress the synthetic lethality of the hal3 sit4 double mutation when overexpressed, suggesting that it is involved in the G1-S transition. This Saccharomyces cerevisiae (strain ATCC 204508 / S288c) (Baker's yeast) protein is Protein VHS2 (VHS2).